Consider the following 480-residue polypeptide: Speriolin (480 aa).

A necessary for targeting to centrosomes region spans residues 1–76 (MSLLTSYEGL…HQGVFLPPAS (76 aa)). Residues 2 to 45 (SLLTSYEGLRHQIERLVRENEELKKLVRLIRENQELKSAIKTQA) adopt a coiled-coil conformation. Disordered stretches follow at residues 252 to 297 (INNI…SRVM) and 305 to 324 (VEME…DNPR).

The protein belongs to the speriolin family. As to quaternary structure, found in a complex with CDC20, CDC27 and TUBG1. Interacts with CDC20. As to expression, expressed in testis. Expressed in pachyten spermatocytes, spermatids and epididymal sperm (at protein level).

The protein resides in the cytoplasm. Its subcellular location is the cytoskeleton. It localises to the microtubule organizing center. The protein localises to the centrosome. The sequence is that of Speriolin (Spatc1) from Mus musculus (Mouse).